A 287-amino-acid polypeptide reads, in one-letter code: Proteasome assembly chaperone 1 (287 aa).

Residues Met-1–Arg-32 are disordered. Over residues Asp-17–Arg-32 the composition is skewed to acidic residues.

Belongs to the PSMG1 family. Forms a heterodimer with psmg2. Degraded by the proteasome upon completion of 20S proteasome maturation.

It localises to the cytoplasm. The protein resides in the endoplasmic reticulum. Chaperone protein which promotes assembly of the 20S proteasome as part of a heterodimer with psmg2. The protein is Proteasome assembly chaperone 1 of Xenopus tropicalis (Western clawed frog).